The chain runs to 411 residues: Glutamate dehydrogenase 1 (411 aa).

K102 is a catalytic residue.

Belongs to the Glu/Leu/Phe/Val dehydrogenases family.

It catalyses the reaction L-glutamate + NAD(+) + H2O = 2-oxoglutarate + NH4(+) + NADH + H(+). The enzyme catalyses L-glutamate + NADP(+) + H2O = 2-oxoglutarate + NH4(+) + NADPH + H(+). The chain is Glutamate dehydrogenase 1 (GDH1) from Arabidopsis thaliana (Mouse-ear cress).